The following is a 493-amino-acid chain: Neuronal pentraxin receptor (493 aa).

Residues 1–2 (MK) are Cytoplasmic-facing. The chain crosses the membrane as a helical; Signal-anchor for type II membrane protein span at residues 3 to 23 (FLAVLLAAGMLAFLGAVICII). Topologically, residues 24–493 (ASVPLAASPA…FDVCKGRAKA (470 aa)) are extracellular. A disordered region spans residues 37–72 (PGGTDNASAASAAGGSGPQRSLSALHSAGGSAGPSV). N42 carries an N-linked (GlcNAc...) asparagine glycan. Residues 57 to 72 (SLSALHSAGGSAGPSV) are compositionally biased toward low complexity. N211 carries N-linked (GlcNAc...) asparagine glycosylation. Residues 285-487 (DAFKVSIPIR…GAKKAAFDVC (203 aa)) enclose the Pentraxin (PTX) domain. A disulfide bridge connects residues C315 and C376. Ca(2+)-binding residues include N340, E418, Q419, D420, and Q430. N456 carries N-linked (GlcNAc...) asparagine glycosylation.

In terms of assembly, heteropentamer with NPTX1 and/or NPTX2. Also binds taipoxin-associated calcium-binding protein 49 (TCBP49/RCN2). Interacts with KLHL2. Ca(2+) is required as a cofactor. Post-translationally, ubiquitinated by a cullin-RING-based BCR (BTB-CUL3-RBX1) E3 ubiquitin-protein ligase complex containing KLHL2.

The protein localises to the membrane. May be involved in mediating uptake of synaptic material during synapse remodeling or in mediating the synaptic clustering of AMPA glutamate receptors at a subset of excitatory synapses. The chain is Neuronal pentraxin receptor (Nptxr) from Mus musculus (Mouse).